Consider the following 90-residue polypeptide: Probable Fe(2+)-trafficking protein (90 aa).

The protein belongs to the Fe(2+)-trafficking protein family.

Could be a mediator in iron transactions between iron acquisition and iron-requiring processes, such as synthesis and/or repair of Fe-S clusters in biosynthetic enzymes. In Coxiella burnetii (strain CbuG_Q212) (Coxiella burnetii (strain Q212)), this protein is Probable Fe(2+)-trafficking protein.